An 838-amino-acid chain; its full sequence is Periostin (838 aa).

The first 23 residues, 1-23 (MVPLLPLYALLLLFLCDINPANA), serve as a signal peptide directing secretion. Residues 42–96 (GPNVCALQQILGTKKKYFSSCKNWYQGAICGKKTTVLYECCPGYMRMEGMKGCPA) enclose the EMI domain. Disulfide bonds link C46–C82, C71–C335, C81–C94, C210–C313, and C469–C474. Position 62 is an S-cysteinyl cysteine (C62). 4 FAS1 domains span residues 99–232 (PIDH…DRVL), 236–367 (GTSI…DEVL), 370–494 (DSAK…REII), and 498–630 (EKSL…DKLL). Residue N601 is glycosylated (N-linked (GlcNAc...) asparagine). The tract at residues 811 to 838 (QGDTPAKKIPANKRVQGPRRRSREGRSQ) is disordered. Over residues 826-838 (QGPRRRSREGRSQ) the composition is skewed to basic residues.

As to quaternary structure, homodimer. Interacts with BMP1 and fibronectin. Gamma-carboxylation is controversial. Gamma-carboxyglutamated; gamma-carboxyglutamate residues are formed by vitamin K dependent carboxylation; these residues may be required for binding to calcium. According to a more recent report in human, does not contain vitamin K-dependent gamma-carboxyglutamate residues. In terms of tissue distribution, preferentially expressed in periosteum and periodontal ligament. Also expressed in the developing and adult heart.

The protein resides in the golgi apparatus. It localises to the secreted. It is found in the extracellular space. The protein localises to the extracellular matrix. Its function is as follows. Induces cell attachment and spreading and plays a role in cell adhesion. Enhances incorporation of BMP1 in the fibronectin matrix of connective tissues, and subsequent proteolytic activation of lysyl oxidase LOX. The sequence is that of Periostin (Postn) from Mus musculus (Mouse).